The following is a 327-amino-acid chain: Phenylalanine--tRNA ligase alpha subunit (327 aa).

Residue Glu-252 coordinates Mg(2+).

Belongs to the class-II aminoacyl-tRNA synthetase family. Phe-tRNA synthetase alpha subunit type 1 subfamily. As to quaternary structure, tetramer of two alpha and two beta subunits. Requires Mg(2+) as cofactor.

It is found in the cytoplasm. The catalysed reaction is tRNA(Phe) + L-phenylalanine + ATP = L-phenylalanyl-tRNA(Phe) + AMP + diphosphate + H(+). This chain is Phenylalanine--tRNA ligase alpha subunit, found in Shigella flexneri.